A 519-amino-acid polypeptide reads, in one-letter code: O-fucosyltransferase 31 (519 aa).

The chain crosses the membrane as a helical; Signal-anchor for type II membrane protein span at residues 18–38; the sequence is ALAGVFVLLFPILYPNLFSPL. N131 carries N-linked (GlcNAc...) asparagine glycosylation. 302-304 is a substrate binding site; the sequence is HLR. Residues N373 and N474 are each glycosylated (N-linked (GlcNAc...) asparagine).

It belongs to the glycosyltransferase GT106 family.

It localises to the membrane. It participates in glycan metabolism. In Arabidopsis thaliana (Mouse-ear cress), this protein is O-fucosyltransferase 31.